Reading from the N-terminus, the 655-residue chain is Protein nipi-3 (655 aa).

Residues 1–35 (MARTKCKTKTVANPRTGVRKTAKDLSEPVRQDAVS) are disordered. The segment covering 21-35 (TAKDLSEPVRQDAVS) has biased composition (basic and acidic residues). Residues 200–470 (IGIFVIYGTG…NQVNGDFPEI (271 aa)) form the Protein kinase domain. ATP is bound by residues 206 to 214 (YGTGLVTRA) and K235.

The protein belongs to the protein kinase superfamily. CAMK Ser/Thr protein kinase family. As to quaternary structure, may interact with transcription factor cebp-1 (via N-terminus). Expressed in epidermis, pharynx, intestine, a subset of head neurons and motoneurons.

It localises to the nucleus. Its function is as follows. Adapter protein that regulates different signaling pathways. Required for larval development and viability. Involved in negatively modulating pmk-1 p38/MAPK signaling. Involved in innate immunity, acting either in a manner dependent upon, or independent of, the pmk-1 or pmk-3 p38/MAPK pathways. Has a protective role in response to infection by the Gram-negative bacterium P.aeruginosa, acting by negatively modulating expression of cebp-1, and regulating the pmk-1 p38/MAPK pathway, leading to activation of transcription factor skn-1. Required to prevent P.aeruginosa toxin ToxA-mediated lethality, probably acting via modulating the effects of translational inhibition caused by the toxin. By regulating the up-regulation in the epidermis of antimicrobial peptides nlp-29 and nlp-31, plays a role in resistance to fungal infection. This is Protein nipi-3 from Caenorhabditis elegans.